Consider the following 365-residue polypeptide: MAPKDFFPPAPLDLDWDNIGIKVREVNGHVECAYNVATESWSEPQVVKGIDLTISGLSPALNYGQQAYEGMKAFRDPQGQIHIFRPEVHAARMAHSCEVVSIPPIPQAQFIRSVALAVSVNAEFVPPFDSSAALYIRPLAFGSGPQINLAQPEEYTFCVFVLPVTSLLGTKPVDALIMEEFDRTAPMGSGNAKVGGNYAPVLRWAAKARARGYGIPLHLDSKTRTEIDEFSAAGFIGVRDDDGKTTIVVPDSSCIIQSVTSDSCVQLARSYGWSVEVRPIKYTELPEFSEVLAVGTAAVIVPIGSITRDSLRDLIVYKPSEDGGYPCADKLFKSIKDIQRGLGKDVFNWCVPVHEPGAYFQPVSA.

A pyridoxal 5'-phosphate-binding site is contributed by Arg92. Lys193 is modified (N6-(pyridoxal phosphate)lysine). Glu229 contributes to the pyridoxal 5'-phosphate binding site.

Belongs to the class-IV pyridoxal-phosphate-dependent aminotransferase family. Pyridoxal 5'-phosphate is required as a cofactor.

It participates in secondary metabolite biosynthesis. Its function is as follows. Aminotransferase; part of the gene cluster that mediates the biosynthesis of oxaleimides, cytotoxic compounds containing an unusual disubstituted succinimide moiety. The first step of the pathway is provided by the HR-PKS poxF that serves in a new mode of collaborative biosynthesis with the PKS-NRPS poxE, by providing the olefin containing amino acid substrate via the synthesis of an ACP-bound dec-4-enoate. The cytochrome P450 monooxygenase poxM-catalyzed oxidation at the alpha-position creates the enzyme-bound 2-hydroxydec-4-enoyl-ACP thioester, which may be prone to spontaneous hydrolysis to yield 2-hydroxydec-4-enoic acid due to increased electrophilicity of the carbonyl. 2-hydroxydec-4-enoic acid can then be further oxidized by poxM to yield the alpha-ketoacid 2-oxodec-4-enoicacid, which is reductively aminated by the aminotransferase poxL to yield (S,E)-2-aminodec-4-enoic acid. The Hybrid PKS-NRPS synthetase poxE then performs condensation between the octaketide product of its PKS modules and the amino group of (S,E)-2-aminodec-4-enoic acid which is activated and incorporated by the adenylation domain. The resulting aminoacyl product can be cyclized by the Diels-Alderase PoxQ and reductively released by the reductive (R) domain of poxE to yield an aldehyde intermediate. The released aldehyde is then substrate for a Knoevenagel condensation by the hydrolyase poxO followed by an oxidation at the 5-position of the pyrrolidone ring. The presence of the olefin from the amino acid building block allows for migration of the substituted allyl group to occur. This allylic transposition reaction takes place in a conjugate addition, semipinacol-like fashion to yield a succinimide intermediate. Iterative two-electron oxidations of the C7 methyl of the succinimide intermediate to the carboxylic acid can be catalyzed by one of two remaining cytochrome P450 monooxygenasess poxC or poxD to yield oxaleimide A. Subsequent oxidation yields the maleimide scaffold oxaleimide I. Both oxaleimide A and oxaleimide I can undergo oxidative modifications in the decalin ring to yield the series of products oxaleimides B to H. This is Aminotransferase poxL from Penicillium oxalicum.